The primary structure comprises 93 residues: UPF0223 protein LACR_0546 (93 aa).

It belongs to the UPF0223 family.

The chain is UPF0223 protein LACR_0546 from Lactococcus lactis subsp. cremoris (strain SK11).